Reading from the N-terminus, the 398-residue chain is Acetate kinase (398 aa).

Mg(2+) is bound at residue Asn-7. ATP is bound at residue Lys-14. Arg-91 provides a ligand contact to substrate. Asp-148 acts as the Proton donor/acceptor in catalysis. ATP contacts are provided by residues 208–212, 283–285, and 331–335; these read HIGNG, DLR, and GVGEN. Residue Glu-385 participates in Mg(2+) binding.

It belongs to the acetokinase family. As to quaternary structure, homodimer. Mg(2+) serves as cofactor. It depends on Mn(2+) as a cofactor.

The protein resides in the cytoplasm. It catalyses the reaction acetate + ATP = acetyl phosphate + ADP. Its pathway is metabolic intermediate biosynthesis; acetyl-CoA biosynthesis; acetyl-CoA from acetate: step 1/2. In terms of biological role, catalyzes the formation of acetyl phosphate from acetate and ATP. Can also catalyze the reverse reaction. This Porphyromonas gingivalis (strain ATCC 33277 / DSM 20709 / CIP 103683 / JCM 12257 / NCTC 11834 / 2561) protein is Acetate kinase.